We begin with the raw amino-acid sequence, 897 residues long: MRPMRIFVNDDRHVMAKHSSVYPTQEELEAVQNMVSHTERALKAVSDWIDEQEKGNSELSEAENMDTPPDDESKEGAGEQKAEHMTRTLRGVMRVGLVAKGLLLKGDLDLELVLLCKEKPTTALLDKVADNLAIQLTTVTEDKYEILQSVDDAAIVIKNTKEPPLSLTIHLTSPVVREEMEKVLAGETLSVNDPPDVLDRQKCLAALASLRHAKWFQARANGLKSCVIVIRVLRDLCTRVPTWGPLRGWPLELLCEKSIGTANRPMGAGEALRRVLECLASGIVMPDGSGIYDPCEKEATDAIGHLDRQQREDITQSAQHALRLAAFGQLHKVLGMDPLPSKMPKKPKNENPVDYTVQIPPSTTYAITPMKRPMEEDGEEKSPSKKKKKIQKKEEKAEPPQAMNALMRLNQLKPGLQYKLISQTGPVHAPIFTMSVEVDGSTFEASGPSKKTAKLHVAVKVLQDMGLPTGAEGRDSSKGEDSAEESDGKPAVVAPPPVVEAVSNPSSVFPSDATTEQGPILTKHGKNPVMELNEKRRGLKYELISETGGSHDKRFVMEVEVDGQKFQGAGSNKKVAKAYAALAALEKLFPDAPLALEANKKKRAPVPVRGGPKFAAKPHNPGFGMGGPMHNEAPPPPNIRGRGRGGNIRGRGRGRGFGGTNHGGGYMNAGAGYGSYGYSSNSATAGYSQFYSNGGHYGNAGGGGSGGGGGSSSYSSYYQGDSYNSPVPPKHAGKKPLHGGQQKPSYSSGYQSHQGQQQPYNQSQYSSYGTPQGKQKGYGHGQGSYSSYSNSYNSPGGGGGSDYSYDSKFNYSGSGGRSGGNSYGSSGSSYNTGSHGGYGAGSGGSSSYQGKQGGYSSQSNYSSPGSSQSYSGPASSYQSSQGGYSRNTEHSMNYQYR.

Residues 5 to 378 form the DZF domain; the sequence is RIFVNDDRHV…PMKRPMEEDG (374 aa). Positions 52 to 85 are disordered; the sequence is QEKGNSELSEAENMDTPPDDESKEGAGEQKAEHM. The segment covering 60-73 has biased composition (acidic residues); the sequence is SEAENMDTPPDDES. T67 carries the phosphothreonine modification. Over residues 74-85 the composition is skewed to basic and acidic residues; sequence KEGAGEQKAEHM. K100 carries the N6-acetyllysine modification. A Phosphothreonine; by PKR modification is found at T188. Position 190 is a phosphoserine (S190). A Glycyl lysine isopeptide (Lys-Gly) (interchain with G-Cter in ubiquitin) cross-link involves residue K297. T315 carries the post-translational modification Phosphothreonine; by PKR. K348 is covalently cross-linked (Glycyl lysine isopeptide (Lys-Gly) (interchain with G-Cter in SUMO1)). Positions 363–401 are disordered; it reads TTYAITPMKRPMEEDGEEKSPSKKKKKIQKKEEKAEPPQ. Residues 371-389 carry the Bipartite nuclear localization signal motif; it reads KRPMEEDGEEKSPSKKKKK. Positions 372-383 are enriched in basic and acidic residues; the sequence is RPMEEDGEEKSP. Phosphoserine is present on residues S382 and S384. A Glycyl lysine isopeptide (Lys-Gly) (interchain with G-Cter in SUMO2) cross-link involves residue K396. The region spanning 398-467 is the DRBM 1 domain; that stretch reads EPPQAMNALM…AVKVLQDMGL (70 aa). K460 is modified (N6-acetyllysine). 3 disordered regions span residues 466 to 524, 624 to 662, and 720 to 897; these read GLPT…LTKH, GMGG…GTNH, and GDSY…YQYR. The segment covering 472-481 has biased composition (basic and acidic residues); the sequence is EGRDSSKGED. 4 positions are modified to phosphoserine: S476, S477, S482, and S486. A Glycyl lysine isopeptide (Lys-Gly) (interchain with G-Cter in SUMO2) cross-link involves residue K489. The segment covering 499-508 has biased composition (low complexity); the sequence is VEAVSNPSSV. One can recognise a DRBM 2 domain in the interval 524 to 590; it reads HGKNPVMELN…ALAALEKLFP (67 aa). The interaction with PRMT1 stretch occupies residues 609–897; that stretch reads RGGPKFAAKP…TEHSMNYQYR (289 aa). Residues 644–662 show a composition bias toward gly residues; that stretch reads RGGNIRGRGRGRGFGGTNH. 3 stretches are compositionally biased toward low complexity: residues 745 to 769, 783 to 794, and 802 to 812; these read SYSS…SSYG, GSYSSYSNSYNS, and DYSYDSKFNYS. A phosphoserine mark is found at S794, S812, S814, and S818. Over residues 813-822 the composition is skewed to gly residues; it reads GSGGRSGGNS. Positions 823 to 833 are enriched in low complexity; it reads YGSSGSSYNTG. Over residues 834–844 the composition is skewed to gly residues; the sequence is SHGGYGAGSGG. Residues 845 to 885 show a composition bias toward low complexity; it reads SSSYQGKQGGYSSQSNYSSPGSSQSYSGPASSYQSSQGGYS.

As to quaternary structure, identified in a IGF2BP1-dependent mRNP granule complex containing untranslated mRNAs. Interacts with FUS and SMN. Interacts (via C-terminus) with PRMT1. Forms a complex with ILF2. Can also bind to PRKDC/XRCC7: this may stabilize the interaction of PRKDC/XRCC7 and the heterodimeric complex of XRCC6/KU70 and XRCC5/KU80. Forms a heteromeric complex with ZNF346 and ILF3. Found in a nuclear export complex with XPO5, ILF3, Ran and double-stranded RNA or double-stranded minihelix VA1 RNA. Found in a nuclear export complex with XPO5, RAN, ILF3, ZNF346 and double-stranded RNA. Interacts with XPO5 and ZNF346. Forms a complex with ILF2, YLPM1, KHDRBS1, RBMX, NCOA5 and PPP1CA. Interacts with AGO1 and AGO2. Interacts with DHX36; this interaction occurs in a RNA-dependent manner. Interacts with ELAVL1; this interaction occurs in a RNA-dependent manner. Interacts with HAVCR2; this interaction promotes ILF3 ubiquitination and subsequent degradation. In terms of processing, phosphorylated at Thr-188 and Thr-315 by PKR in response to RNA viruses. This phosphorylation results in the dissociation of ILF2 from the ILF2-ILF3 complex resulting in a cytoplasmic sequestration of ILF3 where it can bind to viral RNAs and impede viral replication. Methylated by protein arginine N-methyltransferase 1.

It is found in the nucleus. The protein localises to the nucleolus. The protein resides in the cytoplasm. Functionally, RNA-binding protein that plays an essential role in the biogenesis of circular RNAs (circRNAs) which are produced by back-splicing circularization of pre-mRNAs. Within the nucleus, promotes circRNAs processing by stabilizing the regulatory elements residing in the flanking introns of the circularized exons. Plays thereby a role in the back-splicing of a subset of circRNAs. As a consequence, participates in a wide range of transcriptional and post-transcriptional processes. Binds to poly-U elements and AU-rich elements (AREs) in the 3'-UTR of target mRNAs. Upon viral infection, ILF3 accumulates in the cytoplasm and participates in the innate antiviral response. Mechanistically, ILF3 becomes phosphorylated and activated by the double-stranded RNA-activated protein kinase/PKR which releases ILF3 from cellular mature circRNAs. In turn, unbound ILF3 molecules are able to interact with and thus inhibit viral mRNAs. In Rattus norvegicus (Rat), this protein is Interleukin enhancer-binding factor 3 (Ilf3).